A 184-amino-acid chain; its full sequence is Photosystem I assembly protein Ycf4 (184 aa).

2 helical membrane passes run 22 to 42 and 57 to 77; these read FCWA…GTSS and ILFF…LFIS.

This sequence belongs to the Ycf4 family.

It localises to the plastid. Its subcellular location is the chloroplast thylakoid membrane. Its function is as follows. Seems to be required for the assembly of the photosystem I complex. The polypeptide is Photosystem I assembly protein Ycf4 (Phalaenopsis aphrodite subsp. formosana (Moth orchid)).